The following is a 279-amino-acid chain: Tryptophan synthase alpha chain (279 aa).

Active-site proton acceptor residues include glutamate 50 and aspartate 61.

Belongs to the TrpA family. In terms of assembly, tetramer of two alpha and two beta chains.

The catalysed reaction is (1S,2R)-1-C-(indol-3-yl)glycerol 3-phosphate + L-serine = D-glyceraldehyde 3-phosphate + L-tryptophan + H2O. Its pathway is amino-acid biosynthesis; L-tryptophan biosynthesis; L-tryptophan from chorismate: step 5/5. The alpha subunit is responsible for the aldol cleavage of indoleglycerol phosphate to indole and glyceraldehyde 3-phosphate. This chain is Tryptophan synthase alpha chain, found in Brucella anthropi (strain ATCC 49188 / DSM 6882 / CCUG 24695 / JCM 21032 / LMG 3331 / NBRC 15819 / NCTC 12168 / Alc 37) (Ochrobactrum anthropi).